We begin with the raw amino-acid sequence, 495 residues long: YTH domain-containing protein ECT3 (495 aa).

Residues 261 to 398 (AKFYVIKSYS…EQGIKVIKIF (138 aa)) form the YTH domain. RNA-binding positions include 267–269 (KSY), Asp-273, 283–284 (WS), Asn-316, Trp-340, Trp-345, and Trp-353.

In terms of tissue distribution, expressed in the shoot apex, at the sites of leaf formation, and in emerging leaves.

It is found in the cytoplasm. Its function is as follows. Specifically recognizes and binds N6-methyladenosine (m6A)-containing RNAs, and regulates mRNA stability. M6A is a modification present at internal sites of mRNAs and some non-coding RNAs and plays a role in mRNA stability and processing. Required for the correct timing of leaf formation and normal leaf morphology. Required for proper trichome branching and morphology. Functions redundantly with ECT2. The protein is YTH domain-containing protein ECT3 of Arabidopsis thaliana (Mouse-ear cress).